Here is a 449-residue protein sequence, read N- to C-terminus: PGL/p-HBAD biosynthesis rhamnosyltransferase (449 aa).

It belongs to the glycosyltransferase 28 family.

Its function is as follows. Catalyzes the transfer of the first rhamnosyl residue on p-hydroxybenzoic acid or phenolphthiocerol derivatives to form, after O-methylation at position 2 of the sugar unit, mono-O-methyl-glycosyl-p-hydroxybenzoic acid derivative (p-HBAD I) and 2-O-methyl-rhamnosyl-phenolphthiocerol dimycocerosate (also called mycoside B) during p-hydroxybenzoic acid derivatives (p-HBAD) and glycosylated phenolphthiocerol dimycocerosates (PGL) biosynthesis. The sequence is that of PGL/p-HBAD biosynthesis rhamnosyltransferase from Mycobacterium bovis (strain BCG / Pasteur 1173P2).